We begin with the raw amino-acid sequence, 291 residues long: Glycine--tRNA ligase alpha subunit (291 aa).

It belongs to the class-II aminoacyl-tRNA synthetase family. In terms of assembly, tetramer of two alpha and two beta subunits.

The protein resides in the cytoplasm. The catalysed reaction is tRNA(Gly) + glycine + ATP = glycyl-tRNA(Gly) + AMP + diphosphate. The chain is Glycine--tRNA ligase alpha subunit from Geotalea uraniireducens (strain Rf4) (Geobacter uraniireducens).